Consider the following 57-residue polypeptide: Large ribosomal subunit protein bL32 (57 aa).

It belongs to the bacterial ribosomal protein bL32 family.

The chain is Large ribosomal subunit protein bL32 from Shouchella clausii (strain KSM-K16) (Alkalihalobacillus clausii).